The primary structure comprises 364 residues: tRNA 2-selenouridine synthase (364 aa).

One can recognise a Rhodanese domain in the interval 14–137; that stretch reads LIADTPIIDV…LRQTTIQATI (124 aa). The active-site S-selanylcysteine intermediate is the Cys-97.

This sequence belongs to the SelU family. In terms of assembly, monomer.

It catalyses the reaction 5-methylaminomethyl-2-thiouridine(34) in tRNA + selenophosphate + (2E)-geranyl diphosphate + H2O + H(+) = 5-methylaminomethyl-2-selenouridine(34) in tRNA + (2E)-thiogeraniol + phosphate + diphosphate. It carries out the reaction 5-methylaminomethyl-2-thiouridine(34) in tRNA + (2E)-geranyl diphosphate = 5-methylaminomethyl-S-(2E)-geranyl-thiouridine(34) in tRNA + diphosphate. The enzyme catalyses 5-methylaminomethyl-S-(2E)-geranyl-thiouridine(34) in tRNA + selenophosphate + H(+) = 5-methylaminomethyl-2-(Se-phospho)selenouridine(34) in tRNA + (2E)-thiogeraniol. The catalysed reaction is 5-methylaminomethyl-2-(Se-phospho)selenouridine(34) in tRNA + H2O = 5-methylaminomethyl-2-selenouridine(34) in tRNA + phosphate. In terms of biological role, involved in the post-transcriptional modification of the uridine at the wobble position (U34) of tRNA(Lys), tRNA(Glu) and tRNA(Gln). Catalyzes the conversion of 2-thiouridine (S2U-RNA) to 2-selenouridine (Se2U-RNA). Acts in a two-step process involving geranylation of 2-thiouridine (S2U) to S-geranyl-2-thiouridine (geS2U) and subsequent selenation of the latter derivative to 2-selenouridine (Se2U) in the tRNA chain. This Escherichia coli O139:H28 (strain E24377A / ETEC) protein is tRNA 2-selenouridine synthase.